A 299-amino-acid polypeptide reads, in one-letter code: Taste receptor type 2 member 1 (299 aa).

The Extracellular portion of the chain corresponds to 1–9; it reads MLESHLIIY. The helical transmembrane segment at 10 to 30 threads the bilayer; sequence FLLAVIQFLLGTFTNGIIVVV. The Cytoplasmic portion of the chain corresponds to 31 to 55; it reads NGIDLIKHRKMAPLDLLLSCLAVSR. Residues 56 to 76 traverse the membrane as a helical segment; sequence IFLQLFIFYINVVVIFLIEFI. Over 77-81 the chain is Extracellular; sequence TCSAS. Residues 82–102 traverse the membrane as a helical segment; that stretch reads CAFLVFVNELELWLATWLGVF. Over 103–124 the chain is Cytoplasmic; that stretch reads YCAKVASVLHPLFIWLKMRISK. Residues 125-145 form a helical membrane-spanning segment; the sequence is SVPWMILGSLLYVSMICIFHI. Residues 146-178 are Extracellular-facing; the sequence is KYTGFMVPYFLRNLFFQNATIQTEVKQAIQIFS. An N-linked (GlcNAc...) asparagine glycan is attached at asparagine 163. The chain crosses the membrane as a helical span at residues 179 to 199; sequence FVAELLVPLLIFLVAVLLLIF. Residues 200–222 lie on the Cytoplasmic side of the membrane; that stretch reads SLGRHTRQMRNTVAGSRVPGRGA. Residues 223-243 form a helical membrane-spanning segment; sequence HISALLSILSFLILYISHYLI. Residues 244-257 lie on the Extracellular side of the membrane; it reads KTFLSSLKFHVKRF. The chain crosses the membrane as a helical span at residues 258 to 278; sequence VFLFCILVIGTYPSGHSLILI. Residues 279-299 are Cytoplasmic-facing; sequence LGNPKLKQNTKKFLCHSKCCQ.

The protein belongs to the G-protein coupled receptor T2R family.

The protein resides in the membrane. Functionally, receptor that may play a role in the perception of bitterness and is gustducin-linked. May play a role in sensing the chemical composition of the gastrointestinal content. The activity of this receptor may stimulate alpha gustducin, mediate PLC-beta-2 activation and lead to the gating of TRPM5. In Chlorocebus aethiops (Green monkey), this protein is Taste receptor type 2 member 1 (TAS2R1).